Consider the following 498-residue polypeptide: ATP synthase subunit beta, chloroplastic (498 aa).

172–179 (GGAGVGKT) contributes to the ATP binding site.

Belongs to the ATPase alpha/beta chains family. As to quaternary structure, F-type ATPases have 2 components, CF(1) - the catalytic core - and CF(0) - the membrane proton channel. CF(1) has five subunits: alpha(3), beta(3), gamma(1), delta(1), epsilon(1). CF(0) has four main subunits: a(1), b(1), b'(1) and c(9-12).

Its subcellular location is the plastid. The protein localises to the chloroplast thylakoid membrane. The enzyme catalyses ATP + H2O + 4 H(+)(in) = ADP + phosphate + 5 H(+)(out). Functionally, produces ATP from ADP in the presence of a proton gradient across the membrane. The catalytic sites are hosted primarily by the beta subunits. This chain is ATP synthase subunit beta, chloroplastic, found in Schisandra sphenanthera (Southern magnolia vine).